The primary structure comprises 193 residues: Large ribosomal subunit protein uL5 (193 aa).

This sequence belongs to the universal ribosomal protein uL5 family. Part of the 50S ribosomal subunit; part of the 5S rRNA/L5/L18/L25 subcomplex. Contacts the 5S rRNA and the P site tRNA. Forms a bridge to the 30S subunit in the 70S ribosome.

This is one of the proteins that bind and probably mediate the attachment of the 5S RNA into the large ribosomal subunit, where it forms part of the central protuberance. In the 70S ribosome it contacts protein S13 of the 30S subunit (bridge B1b), connecting the 2 subunits; this bridge is implicated in subunit movement. Contacts the P site tRNA; the 5S rRNA and some of its associated proteins might help stabilize positioning of ribosome-bound tRNAs. The protein is Large ribosomal subunit protein uL5 of Arthrobacter sp. (strain FB24).